A 557-amino-acid polypeptide reads, in one-letter code: Inositol-3-phosphate synthase 1 (557 aa).

Gly67, Gly68, Asn69, Asn70, Asp141, Ser177, Val178, Gln188, Arg191, Thr228, Ala229, Asn230, Thr231, Gly278, Ser279, Asp303, Ser306, Asn337, Asn338, Asp339, and Lys352 together coordinate NAD(+). Ser279 is subject to Phosphoserine. Ser357 bears the Phosphoserine mark. Residues Gly390, Asp391, Asp419, and Ser420 each contribute to the NAD(+) site. Residues 512–557 (GPGIKPGEVVATSPLPCKKEPTPATNGCTGDANGHPQAPTPKLSTA) form a disordered region. Ser524 bears the Phosphoserine mark.

It belongs to the myo-inositol 1-phosphate synthase family. Requires NAD(+) as cofactor. As to expression, in testis, it is expressed in Sertoli cells. Highly expressed in 2 types of germ cells, pachytene spermatocytes and round spermatids.

It is found in the cytoplasm. It catalyses the reaction D-glucose 6-phosphate = 1D-myo-inositol 3-phosphate. Its pathway is polyol metabolism; myo-inositol biosynthesis; myo-inositol from D-glucose 6-phosphate: step 1/2. In terms of biological role, key enzyme in myo-inositol biosynthesis pathway that catalyzes the conversion of glucose 6-phosphate to 1-myo-inositol 1-phosphate in a NAD-dependent manner. Rate-limiting enzyme in the synthesis of all inositol-containing compounds. This chain is Inositol-3-phosphate synthase 1 (Isyna1), found in Mus musculus (Mouse).